Consider the following 221-residue polypeptide: Glutathione S-transferase alpha-5 (221 aa).

The region spanning 3–83 (GKPVLHYFDG…YIATKYNLYG (81 aa)) is the GST N-terminal domain. Lys4 carries the post-translational modification N6-succinyllysine. Glutathione-binding positions include Tyr9, Arg45, 54–55 (QV), and 67–68 (QT). Residues 85–207 (DMKERALIDM…LQPGSQRKPF (123 aa)) form the GST C-terminal domain.

This sequence belongs to the GST superfamily. Alpha family. As to quaternary structure, heterodimer of YC1 and YC2. Liver, nasal mucosa and epididymis.

The protein localises to the cytoplasm. The enzyme catalyses RX + glutathione = an S-substituted glutathione + a halide anion + H(+). Its function is as follows. Conjugation of reduced glutathione to a wide number of exogenous and endogenous hydrophobic electrophiles. Has substantial activity toward aflatoxin B1-8,9-epoxide. This chain is Glutathione S-transferase alpha-5 (Gsta5), found in Rattus norvegicus (Rat).